Here is a 468-residue protein sequence, read N- to C-terminus: 3-isopropylmalate dehydratase large subunit (468 aa).

3 residues coordinate [4Fe-4S] cluster: Cys347, Cys408, and Cys411.

Belongs to the aconitase/IPM isomerase family. LeuC type 1 subfamily. Heterodimer of LeuC and LeuD. Requires [4Fe-4S] cluster as cofactor.

The catalysed reaction is (2R,3S)-3-isopropylmalate = (2S)-2-isopropylmalate. It functions in the pathway amino-acid biosynthesis; L-leucine biosynthesis; L-leucine from 3-methyl-2-oxobutanoate: step 2/4. Functionally, catalyzes the isomerization between 2-isopropylmalate and 3-isopropylmalate, via the formation of 2-isopropylmaleate. The protein is 3-isopropylmalate dehydratase large subunit of Janthinobacterium sp. (strain Marseille) (Minibacterium massiliensis).